An 889-amino-acid chain; its full sequence is Potassium/sodium hyperpolarization-activated cyclic nucleotide-gated channel 2 (889 aa).

The segment covering 1-10 (MDARGGGGRP) has biased composition (gly residues). The tract at residues 1-159 (MDARGGGGRP…GPAGEPRGSQ (159 aa)) is disordered. The Cytoplasmic segment spans residues 1–215 (MDARGGGGRP…PYSDFRFYWD (215 aa)). Residues 17 to 55 (TPAPGPPPPPPPAPPQQQPPPPPPPAPPPGPGPAPPQHP) are compositionally biased toward pro residues. Positions 129–155 (GAASGPAPGPGPAEEAGSEEAGPAGEP) are enriched in low complexity. Phosphoserine is present on residues Ser-146 and Ser-161. An involved in subunit assembly region spans residues 158–209 (SQASFMQRQFGALLQPGVNKFSLRMFGSQKAVEREQERVKSAGAWIIHPYSD). Residues 216-236 (FTMLLFMVGNLIIIPVGITFF) form a helical membrane-spanning segment. Residues 237 to 240 (KDET) lie on the Extracellular side of the membrane. Residues 241-261 (TAPWIVFNVVSDTFFLMDLVL) form a helical membrane-spanning segment. Residues 262–288 (NFRTGIVIEDNTEIILDPEKIKKKYLR) lie on the Cytoplasmic side of the membrane. A helical membrane pass occupies residues 289-309 (TWFVVDFVSSIPVDYIFLIVE). The Extracellular portion of the chain corresponds to 310 to 317 (KGIDSEVY). The helical; Voltage-sensor transmembrane segment at 318-338 (KTARALRIVRFTKILSLLRLL) threads the bilayer. Residues 339 to 369 (RLSRLIRYIHQWEEIFHMTYDLASAVMRICN) are Cytoplasmic-facing. A helical transmembrane segment spans residues 370 to 390 (LISMMLLLCHWDGCLQFLVPM). The Extracellular segment spans residues 391-413 (LQDFPRNCWVSINGMVNHSWSEL). A glycan (N-linked (GlcNAc...) asparagine) is linked at Asn-407. Positions 414-435 (YSFALFKAMSHMLCIGYGRQAP) form an intramembrane region, pore-forming. The Extracellular segment spans residues 436-440 (ESMTD). Residues 441 to 461 (IWLTMLSMIVGATCYAMFIGH) traverse the membrane as a helical segment. At 462–889 (ATALIQSLDS…SARSRLSSNL (428 aa)) the chain is on the cytoplasmic side. 3',5'-cyclic AMP is bound by residues Met-599, Gly-608, Glu-609, Ile-610, Cys-611, Arg-618, Thr-619, and Arg-659. Position 668 is a phosphoserine; by PKG/PRKG2 (Ser-668). Ser-754 carries the post-translational modification Phosphoserine. The disordered stretch occupies residues 754–889 (SPRLVRRPPP…SARSRLSSNL (136 aa)). Residue Arg-756 is modified to Omega-N-methylarginine. A compositionally biased stretch (pro residues) spans 760–784 (RPPPGPAPAAASPGPPPPASPPGAP). Ser-771, Ser-779, Ser-786, Ser-866, and Ser-868 each carry phosphoserine. The segment covering 785-860 (ASPRAPRTSP…TPAARAAAPS (76 aa)) has biased composition (low complexity).

Belongs to the potassium channel HCN family. As to quaternary structure, homotetramer. The channel is composed of a homo- or heterotetrameric complex of pore-forming subunits. Heterotetramer with HCN1. Forms an obligate 4:4 complex with accessory subunit PEX5L. Interacts with KCNE2. In terms of processing, phosphorylation at Ser-668 by PRKG2 shifts the voltage-dependence to more negative voltages, hence counteracting the stimulatory effect of cGMP on gating. Post-translationally, S-palmitoylated. N-glycosylated; required for cell surface trafficking of HCN2. In terms of tissue distribution, highly expressed throughout the brain. Detected at low levels in heart.

It localises to the cell membrane. It catalyses the reaction Na(+)(in) = Na(+)(out). The enzyme catalyses K(+)(in) = K(+)(out). It carries out the reaction NH4(+)(in) = NH4(+)(out). Activated by cAMP, and at 10-100 times higher concentrations, also by cGMP. cAMP binding causes a conformation change that leads to the assembly of an active tetramer and channel opening. Binding of cAMP removes a tonic inhibition conferred by cyclic nucleotide-binding domain (CNBD) on channel opening. Channel activity is modulated by intracellular chloride ions and pH; acidic pH shifts the activation to more negative voltages. Inhibited by extracellular cesium ions. Its function is as follows. Hyperpolarization-activated ion channel that is permeable to sodium and potassium ions. Displays lower selectivity for K(+) over Na(+) ions. Contributes to the native pacemaker currents in heart (If) and in neurons (Ih). Can also transport ammonium in the distal nephron. Involved in the initiation of neuropathic pain in sensory neurons. This Homo sapiens (Human) protein is Potassium/sodium hyperpolarization-activated cyclic nucleotide-gated channel 2.